The sequence spans 438 residues: Probable imidazolonepropionase (438 aa).

2 residues coordinate 4-imidazolone-5-propanoate: Tyr-159 and His-192. An N-formimidoyl-L-glutamate-binding site is contributed by Tyr-159. His-260 provides a ligand contact to Fe(3+). Zn(2+) is bound at residue His-260. Glu-263 contributes to the 4-imidazolone-5-propanoate binding site. Position 334 (Asp-334) interacts with Fe(3+). Zn(2+) is bound at residue Asp-334. Residue Asn-336 participates in N-formimidoyl-L-glutamate binding.

It belongs to the metallo-dependent hydrolases superfamily. HutI family. The cofactor is Zn(2+). Fe(3+) is required as a cofactor.

The catalysed reaction is 4-imidazolone-5-propanoate + H2O = N-formimidoyl-L-glutamate. The protein operates within amino-acid degradation; L-histidine degradation into L-glutamate; N-formimidoyl-L-glutamate from L-histidine: step 3/3. The sequence is that of Probable imidazolonepropionase (amdhd1) from Xenopus laevis (African clawed frog).